The chain runs to 93 residues: MDPVKAQQLAAELEVEMMADMYNSLLRMTGACHKKCVPPHYKEAELSKGESVCLDRCVSKYLDIHERMGKKLTELSLQDEELMKKMQQGVTST.

The short motif at 32-57 is the Twin CX3C motif element; that stretch reads CHKKCVPPHYKEAELSKGESVCLDRC. Intrachain disulfides connect Cys-32-Cys-57 and Cys-36-Cys-53.

The protein belongs to the small Tim family. In terms of assembly, heterohexamer; composed of 3 copies of TIMM9 and 3 copies of TIMM10/TIM10A, named soluble 70 kDa complex. The complex forms a 6-bladed alpha-propeller structure and associates with the TIMM22 component of the TIM22 complex. Interacts with multi-pass transmembrane proteins in transit.

The protein resides in the mitochondrion inner membrane. Its function is as follows. Mitochondrial intermembrane chaperone that participates in the import and insertion of multi-pass transmembrane proteins into the mitochondrial inner membrane. May also be required for the transfer of beta-barrel precursors from the TOM complex to the sorting and assembly machinery (SAM complex) of the outer membrane. Acts as a chaperone-like protein that protects the hydrophobic precursors from aggregation and guide them through the mitochondrial intermembrane space. In Xenopus laevis (African clawed frog), this protein is Mitochondrial import inner membrane translocase subunit Tim10-A (timm10-a).